Consider the following 114-residue polypeptide: Lectin MVL (114 aa).

Repeat unit 1 spans residues alanine 2–valine 55. A carbohydrate-binding positions include proline 12–asparagine 16, glutamine 20, and glycine 36–serine 44. Positions glutamate 56–isoleucine 60 are linker. Repeat 2 spans residues histidine 61–phenylalanine 114. Residues proline 71 to asparagine 75, glutamine 79, and glycine 95 to glycine 103 each bind a carbohydrate.

In terms of assembly, homodimer.

Its subcellular location is the cytoplasm. In terms of biological role, carbohydrate-binding protein that binds oligomannosides such as Man(6)GlcNAc(2) with sub-micromolar affinities. The specificity of MVL is unique in that its minimal target comprises the Man-alpha-(1-&gt;6)-Man-beta-(1-&gt;4)-GlcNAc-beta-(1-&gt;4)-GlcNAc tetrasaccharide core (Man(2)A) found in N-linked oligomannosides. Displays hemagglutininating activity on rabbit, horse and hen erythrocytes. This activity is inhibited by yeast mannan. Does not bind mono- and disaccharides. Inhibits HIV-1 envelope-mediated cell fusion at nanomolar concentrations through carbohydrate-mediated interactions with high-mannose residues on the surface of the HIV envelope glycoprotein gp120. Unexpectedly for a lectin, one of the 2 oligomannose binding sites of MVL can catalyze the cleavage of chitin fragments (such as chitotriose, i.e. GlcNAc(3) or GlcNAc-beta-(1-&gt;4)-GlcNAcbeta-(1-&gt;4)-GlcNAc, and chitotetraose, i.e. GlcNAc(4)) to GlcNAc. This weak beta-1,4-glycosidase activity is restricted to the C-terminal carbohydrate-binding site. Does not cleave Man(3)GlcNAc(2) or the tetrasaccharide Man(2)A. This chain is Lectin MVL (mvl), found in Microcystis viridis (Polycystis viridis).